A 114-amino-acid chain; its full sequence is Nascent polypeptide-associated complex protein (114 aa).

The NAC-A/B domain maps to 5 to 69; the sequence is PSQFKNLERM…AKEAQKEEPK (65 aa).

The protein belongs to the NAC-alpha family. As to quaternary structure, homodimer. Interacts with the ribosome. Binds ribosomal RNA.

Contacts the emerging nascent chain on the ribosome. The chain is Nascent polypeptide-associated complex protein from Sulfurisphaera tokodaii (strain DSM 16993 / JCM 10545 / NBRC 100140 / 7) (Sulfolobus tokodaii).